An 87-amino-acid chain; its full sequence is Omega-lycotoxin-Am1b (87 aa).

A signal peptide spans 1–17; it reads MKLSIFFVLFFIAIAYC. The propeptide occupies 18-40; the sequence is QPEFLDDEEDEVEETLPVAEEGR. Cystine bridges form between Cys-44–Cys-59, Cys-51–Cys-64, Cys-58–Cys-84, and Cys-66–Cys-82.

The protein belongs to the neurotoxin omega-lctx family. In terms of tissue distribution, expressed by the venom gland.

It is found in the secreted. Functionally, modulates Cav2.1/CACNA1A voltage-gated calcium channels (P/Q-type currents) in rat cerebellar Purkinje cells and hippocampal CA1-CA3 neurons. At saturating concentrations (&gt;10 nM) decelerates activation kinetics and slightly increases peak amplitude without affecting deactivation kinetics. In vivo, does not cause death when intravenously injected into mice. In rat models, through its activity on Cav2.1/CACNA1A, has an ameliorative effect on memory defects provoked by hyperstimulation of N-methyl-D-aspartate receptors (NMDARs) in the hippocampus. The chain is Omega-lycotoxin-Am1b from Alopecosa marikovskyi (Wolf spider).